A 102-amino-acid polypeptide reads, in one-letter code: Large ribosomal subunit protein uL24 (102 aa).

The protein belongs to the universal ribosomal protein uL24 family. As to quaternary structure, part of the 50S ribosomal subunit.

Its function is as follows. One of two assembly initiator proteins, it binds directly to the 5'-end of the 23S rRNA, where it nucleates assembly of the 50S subunit. Functionally, one of the proteins that surrounds the polypeptide exit tunnel on the outside of the subunit. The sequence is that of Large ribosomal subunit protein uL24 from Alcanivorax borkumensis (strain ATCC 700651 / DSM 11573 / NCIMB 13689 / SK2).